We begin with the raw amino-acid sequence, 264 residues long: ATP synthase subunit a (264 aa).

6 helical membrane-spanning segments follow: residues 29–49 (TWHI…LWIF), 87–107 (NALI…MNFM), 134–154 (DLNI…YYSI), 177–197 (IPVN…SLAL), 208–228 (LIFI…SLGV), and 235–255 (LIFH…LTIV).

This sequence belongs to the ATPase A chain family. As to quaternary structure, F-type ATPases have 2 components, CF(1) - the catalytic core - and CF(0) - the membrane proton channel. CF(1) has five subunits: alpha(3), beta(3), gamma(1), delta(1), epsilon(1). CF(0) has three main subunits: a(1), b(2) and c(9-12). The alpha and beta chains form an alternating ring which encloses part of the gamma chain. CF(1) is attached to CF(0) by a central stalk formed by the gamma and epsilon chains, while a peripheral stalk is formed by the delta and b chains.

It is found in the cell inner membrane. Its function is as follows. Key component of the proton channel; it plays a direct role in the translocation of protons across the membrane. This chain is ATP synthase subunit a, found in Shewanella amazonensis (strain ATCC BAA-1098 / SB2B).